A 697-amino-acid chain; its full sequence is Elongation factor G (697 aa).

A tr-type G domain is found at 8–282; that stretch reads ENTRNIGIMA…AIVDYMPSPV (275 aa). GTP-binding positions include 17 to 24, 81 to 85, and 135 to 138; these read AHIDAGKT, DTPGH, and NKMD.

It belongs to the TRAFAC class translation factor GTPase superfamily. Classic translation factor GTPase family. EF-G/EF-2 subfamily.

The protein localises to the cytoplasm. Its function is as follows. Catalyzes the GTP-dependent ribosomal translocation step during translation elongation. During this step, the ribosome changes from the pre-translocational (PRE) to the post-translocational (POST) state as the newly formed A-site-bound peptidyl-tRNA and P-site-bound deacylated tRNA move to the P and E sites, respectively. Catalyzes the coordinated movement of the two tRNA molecules, the mRNA and conformational changes in the ribosome. The protein is Elongation factor G of Acetivibrio thermocellus (strain ATCC 27405 / DSM 1237 / JCM 9322 / NBRC 103400 / NCIMB 10682 / NRRL B-4536 / VPI 7372) (Clostridium thermocellum).